The following is a 399-amino-acid chain: Yellow-related salivary protein LJM11 (399 aa).

The N-terminal stretch at 1 to 18 is a signal peptide; the sequence is MKVFFSIFTLVLFQGTLG. A disulfide bridge connects residues cysteine 115 and cysteine 186. Asparagine 213 carries N-linked (GlcNAc...) asparagine glycosylation. The cysteines at positions 319 and 395 are disulfide-linked. Serotonin is bound by residues threonine 345, asparagine 360, and phenylalanine 362.

It belongs to the major royal jelly protein family. As to expression, salivary gland (at protein level).

It localises to the secreted. Functionally, probably modulates blood feeding of sand flies on vertebrate species by binding and sequestering different mediators involved in the host response. Binds biogenic amines. Binds serotonin with high affinity. Binds adrenaline and noradrenaline. Binds dopamine and octopamine. Poorly binds histamine. Induces a delayed type hypersensitivity response in host tissues. Induces systemic Th1 immune response in the host. Immunogenic; elicits antibody production in the host. Functions as a chemoattractant for host neutrophils; likely acts through a G-protein-coupled receptor and effect is dependent on calcium influx. Its function is as follows. (Microbial infection) Modulates infection caused by Leishmania species in the host. The protein is Yellow-related salivary protein LJM11 of Lutzomyia longipalpis (Sand fly).